The primary structure comprises 1281 residues: Zinc finger transcription factor Trps1 (1281 aa).

The tract at residues 1–198 (MVRKKNPPLR…VPSDGGVRLN (198 aa)) is disordered. K29 is covalently cross-linked (Glycyl lysine isopeptide (Lys-Gly) (interchain with G-Cter in SUMO2)). Polar residues predominate over residues 40-49 (DQMSENTDQS). Residues 53-63 (ELNHKEEHSLH) show a composition bias toward basic and acidic residues. Residue K76 forms a Glycyl lysine isopeptide (Lys-Gly) (interchain with G-Cter in SUMO2) linkage. Phosphoserine occurs at positions 90 and 127. Positions 148 to 162 (LETKEDQKMSPKATE) are enriched in basic and acidic residues. Positions 163–189 (ETGQAQSGQANCQGLSPVSVASKNPQV) are enriched in polar residues. Phosphoserine is present on residues S178 and S216. The C2H2-type 1; atypical zinc-finger motif lies at 222–247 (FKCNICGYGYYGNDPTDLIKHFRKYH). Residue K263 forms a Glycyl lysine isopeptide (Lys-Gly) (interchain with G-Cter in SUMO2) linkage. A C2H2-type 2; atypical zinc finger spans residues 333 to 358 (FRCKFCNFTYMGNSSTELEQHFLQTH). The interval 365 to 394 (SLPSSEVAKPSEKNSNKSIPALQSSDSGDL) is disordered. Residues 380-391 (NKSIPALQSSDS) show a composition bias toward polar residues. Residues K418, K457, K474, and K488 each participate in a glycyl lysine isopeptide (Lys-Gly) (interchain with G-Cter in SUMO2) cross-link. Residues 483-512 (QNDLAKSSEGETMTKTDKSSSGAKKKDFSS) form a disordered region. Residues 488 to 512 (KSSEGETMTKTDKSSSGAKKKDFSS) show a composition bias toward basic and acidic residues. Residues 614 to 637 (HQCHQCSFTTPDVDVLLFHYESVH) form a C2H2-type 3; atypical zinc finger. Positions 635 to 819 (SVHESQASDV…SLGLLTPVSG (185 aa)) are mediates interaction with GLI3. Residue K645 forms a Glycyl lysine isopeptide (Lys-Gly) (interchain with G-Cter in SUMO2) linkage. C2H2-type zinc fingers lie at residues 666–689 (HSCTKCDFITQVEEEISRHYRRAH) and 692–715 (YKCRQCSFTAADTQSLLEHFNTVH). Residue K737 forms a Glycyl lysine isopeptide (Lys-Gly) (interchain with G-Cter in SUMO2) linkage. At T751 the chain carries Phosphothreonine. K755 is covalently cross-linked (Glycyl lysine isopeptide (Lys-Gly) (interchain with G-Cter in SUMO2)). K766 is covalently cross-linked (Glycyl lysine isopeptide (Lys-Gly) (interchain with G-Cter in SUMO1); alternate). A Glycyl lysine isopeptide (Lys-Gly) (interchain with G-Cter in SUMO2); alternate cross-link involves residue K766. Residues K825, K850, K877, and K879 each participate in a glycyl lysine isopeptide (Lys-Gly) (interchain with G-Cter in SUMO2) cross-link. Residues 856 to 887 (APAGGEKSGALPQQYPASGENKSKDESQSLLR) form a disordered region. Residues 896–920 (CANCLTTKTSLWRKNANGGYVCNAC) form a GATA-type zinc finger. Glycyl lysine isopeptide (Lys-Gly) (interchain with G-Cter in SUMO2) cross-links involve residues K925, K937, and K965. Residues 961–977 (EQLNKQQRGSNEEQVNG) are compositionally biased toward polar residues. Residues 961-1000 (EQLNKQQRGSNEEQVNGSPLERRSEDHLTESHQREIPLPS) are disordered. S978 is modified (phosphoserine). Basic and acidic residues predominate over residues 980-995 (LERRSEDHLTESHQRE). The tract at residues 985–1184 (EDHLTESHQR…PTANGASKEK (200 aa)) is mediates interaction with RNF4. Residues K1003, K1012, K1030, and K1040 each participate in a glycyl lysine isopeptide (Lys-Gly) (interchain with G-Cter in SUMO2) cross-link. Residues 1039–1080 (IKSPQESTGDPGNSSSVSEGKGSSERGSPIEKYMRPAKHPNY) form a disordered region. Residues 1040–1049 (KSPQESTGDP) are compositionally biased toward polar residues. A Phosphoserine modification is found at S1041. Residues 1050-1059 (GNSSSVSEGK) show a composition bias toward low complexity. The segment covering 1060 to 1072 (GSSERGSPIEKYM) has biased composition (basic and acidic residues). Phosphoserine is present on S1066. K1070 is covalently cross-linked (Glycyl lysine isopeptide (Lys-Gly) (interchain with G-Cter in SUMO2)). At S1085 the chain carries Phosphoserine. The segment at 1163–1281 (PLDLAIKHSR…QVEKNGKPKE (119 aa)) is transcriptional repressor domain. The disordered stretch occupies residues 1168–1196 (IKHSRPGPTANGASKEKTKAPPNVKNEGP). Glycyl lysine isopeptide (Lys-Gly) (interchain with G-Cter in SUMO2); alternate cross-links involve residues K1192 and K1201. Glycyl lysine isopeptide (Lys-Gly) (interchain with G-Cter in SUMO); alternate cross-links involve residues K1192 and K1201. K1201 participates in a covalent cross-link: Glycyl lysine isopeptide (Lys-Gly) (interchain with G-Cter in SUMO1); alternate. C2H2-type zinc fingers lie at residues 1215-1237 (TKCVHCGIVFLDEVMYALHMSCH) and 1243-1267 (FQCSICQHLCTDKYDFTTHIQRGLH).

As to quaternary structure, interacts with RNF4; regulates TRPS1 repressor activity. Interacts specifically with the activator form of GLI3 (GLI3A) but not with the repressor form (GLI3R). In terms of processing, sumoylated. Sumoylation in the repressor domain inhibits the transcription repression activity. Sumoylation on Lys-1201 is the major site. Appears to be sumoylated on multiple sites. Ubiquitously expressed in the adult. Found in fetal brain, lung, kidney, liver, spleen and thymus. More highly expressed in androgen-dependent than in androgen-independent prostate cancer cells.

Its subcellular location is the nucleus. In terms of biological role, transcriptional repressor. Binds specifically to GATA sequences and represses expression of GATA-regulated genes at selected sites and stages in vertebrate development. Regulates chondrocyte proliferation and differentiation. Executes multiple functions in proliferating chondrocytes, expanding the region of distal chondrocytes, activating proliferation in columnar cells and supporting the differentiation of columnar into hypertrophic chondrocytes. The protein is Zinc finger transcription factor Trps1 (TRPS1) of Homo sapiens (Human).